A 130-amino-acid polypeptide reads, in one-letter code: Small ribosomal subunit protein uS8 (130 aa).

Belongs to the universal ribosomal protein uS8 family. Part of the 30S ribosomal subunit.

Its function is as follows. One of the primary rRNA binding proteins, it binds directly to 16S rRNA central domain where it helps coordinate assembly of the platform of the 30S subunit. The protein is Small ribosomal subunit protein uS8 of Methanococcus voltae.